The sequence spans 452 residues: NADH-quinone oxidoreductase subunit H (452 aa).

Transmembrane regions (helical) follow at residues 28–48 (IILI…LMMI), 96–116 (VIYI…FSVI), 136–156 (LPVA…GIVL), 177–197 (VISY…YAGT), 210–230 (IWFA…MIGE), 264–286 (AEYV…GYLA), 301–321 (WWPA…FVWV), 335–355 (KLGW…VAVI), and 366–386 (YVTA…LWAW).

It belongs to the complex I subunit 1 family. As to quaternary structure, NDH-1 is composed of 14 different subunits. Subunits NuoA, H, J, K, L, M, N constitute the membrane sector of the complex.

It is found in the cell membrane. It carries out the reaction a quinone + NADH + 5 H(+)(in) = a quinol + NAD(+) + 4 H(+)(out). NDH-1 shuttles electrons from NADH, via FMN and iron-sulfur (Fe-S) centers, to quinones in the respiratory chain. The immediate electron acceptor for the enzyme in this species is believed to be ubiquinone. Couples the redox reaction to proton translocation (for every two electrons transferred, four hydrogen ions are translocated across the cytoplasmic membrane), and thus conserves the redox energy in a proton gradient. This subunit may bind ubiquinone. The polypeptide is NADH-quinone oxidoreductase subunit H (Thermobifida fusca (strain YX)).